The following is a 798-amino-acid chain: Translation initiation factor IF-2 (798 aa).

Residues 40–207 (SEQETKLRQA…QQESAKPAVP (168 aa)) are disordered. The span at 57 to 186 (NTQSKATNNQ…RNNFNNQNRN (130 aa)) shows a compositional bias: low complexity. Residues 187–196 (RFNKKGKKGK) are compositionally biased toward basic residues. The tr-type G domain maps to 300–469 (TRPPVVTIMG…LLIAEVEDLK (170 aa)). The G1 stretch occupies residues 309–316 (GHVDHGKT). Position 309 to 316 (309 to 316 (GHVDHGKT)) interacts with GTP. Residues 334–338 (GITQH) form a G2 region. The G3 stretch occupies residues 355–358 (DTPG). GTP contacts are provided by residues 355–359 (DTPGH) and 409–412 (NKID). The segment at 409–412 (NKID) is G4. Positions 445 to 447 (SAK) are G5.

This sequence belongs to the TRAFAC class translation factor GTPase superfamily. Classic translation factor GTPase family. IF-2 subfamily.

The protein localises to the cytoplasm. One of the essential components for the initiation of protein synthesis. Protects formylmethionyl-tRNA from spontaneous hydrolysis and promotes its binding to the 30S ribosomal subunits. Also involved in the hydrolysis of GTP during the formation of the 70S ribosomal complex. The polypeptide is Translation initiation factor IF-2 (Enterococcus faecalis (strain ATCC 700802 / V583)).